Consider the following 170-residue polypeptide: CFA/I fimbrial subunit B (170 aa).

Positions 1 to 23 are cleaved as a signal peptide; it reads MKFKKTIGAMALTTMFVAVSASA.

This sequence belongs to the fimbrial CS1 protein family. As to quaternary structure, CFA/I fimbriae are rather rigid, thread-like filaments of 0.5-1 micrometer, with an apparent axial hole, and a diameter of 7 nanometers. A single CFA/I fimbria consists of about 100 identical protein subunits.

It localises to the fimbrium. Fimbriae (also called pili), polar filaments radiating from the surface of the bacterium to a length of 0.5-1.5 micrometers and numbering 100-300 per cell, enable bacteria to colonize the epithelium of specific host organs. The polypeptide is CFA/I fimbrial subunit B (cfaB) (Escherichia coli).